A 448-amino-acid chain; its full sequence is Phosphoglucosamine mutase (448 aa).

Catalysis depends on Ser102, which acts as the Phosphoserine intermediate. Residues Ser102, Asp243, Asp245, and Asp247 each contribute to the Mg(2+) site. Phosphoserine is present on Ser102.

Belongs to the phosphohexose mutase family. Requires Mg(2+) as cofactor. In terms of processing, activated by phosphorylation.

The catalysed reaction is alpha-D-glucosamine 1-phosphate = D-glucosamine 6-phosphate. In terms of biological role, catalyzes the conversion of glucosamine-6-phosphate to glucosamine-1-phosphate. The polypeptide is Phosphoglucosamine mutase (Mycobacterium bovis (strain ATCC BAA-935 / AF2122/97)).